A 166-amino-acid polypeptide reads, in one-letter code: Small ribosomal subunit protein uS5 (166 aa).

The S5 DRBM domain occupies 11–74 (LQEKLVQVNR…EAARKNMVDV (64 aa)).

Belongs to the universal ribosomal protein uS5 family. In terms of assembly, part of the 30S ribosomal subunit. Contacts proteins S4 and S8.

Functionally, with S4 and S12 plays an important role in translational accuracy. Located at the back of the 30S subunit body where it stabilizes the conformation of the head with respect to the body. In Marinobacter nauticus (strain ATCC 700491 / DSM 11845 / VT8) (Marinobacter aquaeolei), this protein is Small ribosomal subunit protein uS5.